A 509-amino-acid polypeptide reads, in one-letter code: ATP synthase subunit alpha, mitochondrial (509 aa).

Residue 171 to 178 coordinates ATP; sequence GDRQTGKT.

Belongs to the ATPase alpha/beta chains family. As to quaternary structure, F-type ATPases have 2 components, CF(1) - the catalytic core - and CF(0) - the membrane proton channel. CF(1) has five subunits: alpha(3), beta(3), gamma(1), delta(1), epsilon(1). CF(0) has three main subunits: a, b and c.

It is found in the mitochondrion. The protein resides in the mitochondrion inner membrane. Its function is as follows. Mitochondrial membrane ATP synthase (F(1)F(0) ATP synthase or Complex V) produces ATP from ADP in the presence of a proton gradient across the membrane which is generated by electron transport complexes of the respiratory chain. F-type ATPases consist of two structural domains, F(1) - containing the extramembraneous catalytic core, and F(0) - containing the membrane proton channel, linked together by a central stalk and a peripheral stalk. During catalysis, ATP synthesis in the catalytic domain of F(1) is coupled via a rotary mechanism of the central stalk subunits to proton translocation. Subunits alpha and beta form the catalytic core in F(1). Rotation of the central stalk against the surrounding alpha(3)beta(3) subunits leads to hydrolysis of ATP in three separate catalytic sites on the beta subunits. Subunit alpha does not bear the catalytic high-affinity ATP-binding sites. In Triticum aestivum (Wheat), this protein is ATP synthase subunit alpha, mitochondrial (ATPA).